The sequence spans 361 residues: Probable purine permease 5 (361 aa).

The next 9 helical transmembrane spans lie at 37–57, 70–90, 105–125, 134–154, 158–178, 193–213, 235–255, 285–305, and 315–335; these read WILL…SSLL, WIIS…LLPT, LVLS…MYAY, TSSL…YLIV, LNAS…IIAL, YFAG…IFAL, VMVS…SNDF, LGVL…AGVL, and VAAV…SLVL. The 104-residue stretch at 75-178 folds into the EamA domain; that stretch reads VAVAGWPITC…ITGAMAIIAL (104 aa).

This sequence belongs to the purine permeases (TC 2.A.7.14) family.

Its subcellular location is the membrane. This is Probable purine permease 5 (PUP5) from Arabidopsis thaliana (Mouse-ear cress).